The chain runs to 172 residues: Adenine phosphoribosyltransferase (172 aa).

It belongs to the purine/pyrimidine phosphoribosyltransferase family. Homodimer.

The protein resides in the cytoplasm. The enzyme catalyses AMP + diphosphate = 5-phospho-alpha-D-ribose 1-diphosphate + adenine. It functions in the pathway purine metabolism; AMP biosynthesis via salvage pathway; AMP from adenine: step 1/1. In terms of biological role, catalyzes a salvage reaction resulting in the formation of AMP, that is energically less costly than de novo synthesis. This is Adenine phosphoribosyltransferase from Prochlorococcus marinus (strain NATL2A).